Reading from the N-terminus, the 268-residue chain is NADH-quinone oxidoreductase subunit B 2 (268 aa).

Cys42, Cys43, Cys108, and Cys138 together coordinate [4Fe-4S] cluster. Residues Ser237–Arg268 are disordered. Residues Glu247–Arg268 are compositionally biased toward basic and acidic residues.

It belongs to the complex I 20 kDa subunit family. NDH-1 is composed of 14 different subunits. Subunits NuoB, C, D, E, F, and G constitute the peripheral sector of the complex. Requires [4Fe-4S] cluster as cofactor.

It is found in the cell membrane. It carries out the reaction a quinone + NADH + 5 H(+)(in) = a quinol + NAD(+) + 4 H(+)(out). Its function is as follows. NDH-1 shuttles electrons from NADH, via FMN and iron-sulfur (Fe-S) centers, to quinones in the respiratory chain. The immediate electron acceptor for the enzyme in this species is believed to be ubiquinone. Couples the redox reaction to proton translocation (for every two electrons transferred, four hydrogen ions are translocated across the cytoplasmic membrane), and thus conserves the redox energy in a proton gradient. The polypeptide is NADH-quinone oxidoreductase subunit B 2 (Roseiflexus castenholzii (strain DSM 13941 / HLO8)).